We begin with the raw amino-acid sequence, 305 residues long: Myb-like transcriptional regulator basR (305 aa).

Myb-like domains follow at residues 5 to 59 (RRRW…YNRF), 60 to 110 (TGGL…HHCL), and 111 to 162 (NPEL…TILS). The tract at residues 175–215 (PCCDSPSPSKSSRRPPSTPTSTPQVPGSRQGSSYDPYDYGS) is disordered. Positions 198–207 (QVPGSRQGSS) are enriched in polar residues.

It localises to the nucleus. In terms of biological role, transcription regulator that acts as a central regulatory node for the integration of external bacterial signals leading to the regulation of secondary metabolite gene clusters such as orsellinic, lecanoric acid, cichorine, 2,4-dihydroxy-3-methyl-6-(2-oxopropyl)benzaldehyde (dba), emericellamide or microperfuranone clusters. This Emericella nidulans (strain FGSC A4 / ATCC 38163 / CBS 112.46 / NRRL 194 / M139) (Aspergillus nidulans) protein is Myb-like transcriptional regulator basR.